We begin with the raw amino-acid sequence, 527 residues long: Cytochrome P450 714B3 (527 aa).

Over Met1–Ser14 the chain is Lumenal. The chain crosses the membrane as a helical; Signal-anchor for type III membrane protein span at residues Leu15–Pro35. Over Gln36–Ile527 the chain is Cytoplasmic. Heme is bound at residue Cys464.

It belongs to the cytochrome P450 family. It depends on heme as a cofactor.

It localises to the membrane. Functionally, may be involved in gibberellin metabolism. This Zea mays (Maize) protein is Cytochrome P450 714B3 (CYP714B3).